A 148-amino-acid polypeptide reads, in one-letter code: Single-stranded DNA-binding protein, mitochondrial (148 aa).

A mitochondrion-targeting transit peptide spans 1-16; it reads MFRRPALQVLRQFVRH. The region spanning 30–141 is the SSB domain; the sequence is LNRVQLLGRV…IIADNIVFLS (112 aa). Residues Ser-67 and Ser-79 each carry the phosphoserine modification. N6-acetyllysine is present on Lys-113. Lys-122 is modified (N6-succinyllysine).

Homotetramer. Interacts with MPG/AAG, through inhibition of its glycosylase activity it potentially prevents formation of DNA breaks in ssDNA, ensuring that base removal primarily occurs in dsDNA. Interacts with POLDIP2. Interacts with PRIMPOL.

The protein localises to the mitochondrion. It localises to the mitochondrion matrix. The protein resides in the mitochondrion nucleoid. Binds preferentially and cooperatively to pyrimidine rich single-stranded DNA (ss-DNA). In vitro, required to maintain the copy number of mitochondrial DNA (mtDNA) and plays a crucial role during mtDNA replication by stimulating the activity of the replisome components POLG and TWNK at the replication fork. Promotes the activity of the gamma complex polymerase POLG, largely by organizing the template DNA and eliminating secondary structures to favor ss-DNA conformations that facilitate POLG activity. In addition it is able to promote the 5'-3' unwinding activity of the mtDNA helicase TWNK. May also function in mtDNA repair. This Oryctolagus cuniculus (Rabbit) protein is Single-stranded DNA-binding protein, mitochondrial (SSBP1).